The chain runs to 325 residues: MIASAASAPRAICLLGPTASGKTAAALKLAERWPVEIISMDSALVYRGMDIGTAKPSAEEQAIAPHHLIDIIDPLDAYSAAQFANDANALIDAIRARGKLPLIVGGTMLYYKALTQGLSDLPGADPAIRAEIDAEAARDGWPALHAKLALVDPVTAARLHTTDAQRIQRALELYRLTGQPMSALLAREVGANAFQQHDAAAPYLTIALEPSDRLVLHARIAQRFDAMLAGGLLDEVEGLRRRGDLSPTLPSIRCVGYRQAWAYLEGEIDMAALREQGIAATRQLCKRQITWLRSTPERHVVDCLAPDYVDQVARLVQTSLESQSQ.

16-23 contacts ATP; the sequence is GPTASGKT. Residue 18-23 coordinates substrate; that stretch reads TASGKT. Interaction with substrate tRNA stretches follow at residues 41-44, 165-169, 253-258, and 286-293; these read DSAL, QRIQR, RCVGYR, and KRQITWLR.

The protein belongs to the IPP transferase family. Monomer. The cofactor is Mg(2+).

The catalysed reaction is adenosine(37) in tRNA + dimethylallyl diphosphate = N(6)-dimethylallyladenosine(37) in tRNA + diphosphate. Catalyzes the transfer of a dimethylallyl group onto the adenine at position 37 in tRNAs that read codons beginning with uridine, leading to the formation of N6-(dimethylallyl)adenosine (i(6)A). The sequence is that of tRNA dimethylallyltransferase from Ralstonia pickettii (strain 12J).